Reading from the N-terminus, the 757-residue chain is Endonuclease MutS2 (757 aa).

ATP is bound at residue 321 to 328 (GPNMGGKT). One can recognise a Smr domain in the interval 681 to 756 (IDIRGMTVEE…GTGVTVVEVE (76 aa)).

The protein belongs to the DNA mismatch repair MutS family. MutS2 subfamily. In terms of assembly, homodimer. Binds to stalled ribosomes, contacting rRNA.

Endonuclease that is involved in the suppression of homologous recombination and thus may have a key role in the control of bacterial genetic diversity. In terms of biological role, acts as a ribosome collision sensor, splitting the ribosome into its 2 subunits. Detects stalled/collided 70S ribosomes which it binds and splits by an ATP-hydrolysis driven conformational change. Acts upstream of the ribosome quality control system (RQC), a ribosome-associated complex that mediates the extraction of incompletely synthesized nascent chains from stalled ribosomes and their subsequent degradation. Probably generates substrates for RQC. The chain is Endonuclease MutS2 from Thermotoga neapolitana (strain ATCC 49049 / DSM 4359 / NBRC 107923 / NS-E).